A 272-amino-acid polypeptide reads, in one-letter code: Rhomboid-type serine protease B (272 aa).

5 consecutive transmembrane segments (helical) span residues 30–50, 72–92, 103–123, 133–153, and 164–184; these read IVLL…WSVV, PFIH…TPLL, TAVA…YILV, AVVG…IKTF, and TKIP…IFVP. Ser-138 (nucleophile) is an active-site residue. N-linked (GlcNAc...) asparagine glycosylation occurs at Asn-185. Residues 186-206 form a helical membrane-spanning segment; sequence TSFLGHLSAIIIGYLLGLGYL. The active site involves His-191.

The protein belongs to the peptidase S54 family.

The protein localises to the membrane. It carries out the reaction Cleaves type-1 transmembrane domains using a catalytic dyad composed of serine and histidine that are contributed by different transmembrane domains.. Functionally, rhomboid protease that catalyzes intramembrane proteolysis. Required for transcription factor srbA activation by mediating its release from the membrane and thereby regulating its activity under hypoxic conditions. Essential for iron homeostasis and resistance to azoles such as voriconazole. Required for virulence in murine models of invasive pulmonary aspergillosis (IPA). The polypeptide is Rhomboid-type serine protease B (Aspergillus fumigatus (strain CBS 144.89 / FGSC A1163 / CEA10) (Neosartorya fumigata)).